The chain runs to 449 residues: Clusterin (449 aa).

A signal peptide spans 1-22 (MMKTLLLFVGLLLTWESGQVLG). The Nuclear localization signal signature appears at 78–81 (KKKK). Residue Asn86 is glycosylated (N-linked (GlcNAc...) (complex) asparagine). 5 cysteine pairs are disulfide-bonded: Cys102/Cys313, Cys113/Cys305, Cys116/Cys302, Cys121/Cys295, and Cys129/Cys285. A glycan (N-linked (GlcNAc...) asparagine) is linked at Asn103. Ser133 is subject to Phosphoserine. N-linked (GlcNAc...) asparagine glycosylation is found at Asn145, Asn291, and Asn354. The N-linked (GlcNAc...) (complex) asparagine glycan is linked to Asn374. Ser396 carries the post-translational modification Phosphoserine. The Nuclear localization signal signature appears at 443-447 (RKKHR).

It belongs to the clusterin family. As to quaternary structure, antiparallel disulfide-linked heterodimer of an alpha chain and a beta chain. Self-associates and forms higher oligomers. Interacts with a broad range of misfolded proteins, including APP, APOC2 and LYZ. Slightly acidic pH promotes interaction with misfolded proteins. Forms high-molecular weight oligomers upon interaction with misfolded proteins. Interacts with APOA1, LRP2, CLUAP1 and PON1. Interacts with the complement membrane attack complex. Interacts (via alpha chain) with XRCC6. Interacts with SYVN1, COMMD1, BTRC, CUL1 and with ubiquitin and SCF (SKP1-CUL1-F-box protein) E3 ubiquitin-protein ligase complexes. Interacts (via alpha chain) with BAX in stressed cells, where BAX undergoes a conformation change leading to association with the mitochondrial membrane. Does not interact with BAX in unstressed cells. Found in a complex with LTF, CLU, EPPIN and SEMG1. Interacts (immaturely glycosylated pre-secreted form) with HSPA5; this interaction promotes CLU stability and facilitates stress-induced CLU retrotranslocation from the secretory pathway to the mitochondria, thereby reducing stress-induced apoptosis by stabilizing mitochondrial membrane integrity. Interacts (isoform 4) with BCL2L1; this interaction releases and activates BAX and promotes cell death. Interacts with TGFBR2 and ACVR1. Interacts (secreted form) with STMN3; this interaction may act as an important modulator during neuronal differentiation. Interacts with VLDLR and LRP8. Proteolytically cleaved on its way through the secretory system, probably within the Golgi lumen. Proteolytic cleavage is not necessary for its chaperone activity. All non-secreted forms are not proteolytically cleaved. Chaperone activity of uncleaved forms is dependent on a non-reducing environment. In terms of processing, polyubiquitinated, leading to proteasomal degradation. Under cellular stress, the intracellular level of cleaved form is reduced due to proteasomal degradation. Post-translationally, extensively glycosylated with sulfated N-linked carbohydrates. About 30% of the protein mass is comprised of complex N-linked carbohydrate. Endoplasmic reticulum (ER) stress induces changes in glycosylation status and increases level of hypoglycosylated forms. Core carbohydrates are essential for chaperone activity. Non-secreted forms are hypoglycosylated or unglycosylated. Detected in blood plasma, cerebrospinal fluid, milk, seminal plasma and colon mucosa. Detected in the germinal center of colon lymphoid nodules and in colon parasympathetic ganglia of the Auerbach plexus (at protein level). Ubiquitous. Detected in brain, testis, ovary, liver and pancreas, and at lower levels in kidney, heart, spleen and lung.

It localises to the secreted. It is found in the cytoplasm. The protein resides in the nucleus. Its subcellular location is the mitochondrion membrane. The protein localises to the cytosol. It localises to the microsome. It is found in the endoplasmic reticulum. The protein resides in the mitochondrion. Its subcellular location is the perinuclear region. The protein localises to the cytoplasmic vesicle. It localises to the secretory vesicle. It is found in the chromaffin granule. Functions as extracellular chaperone that prevents aggregation of non native proteins. Prevents stress-induced aggregation of blood plasma proteins. Inhibits formation of amyloid fibrils by APP, APOC2, B2M, CALCA, CSN3, SNCA and aggregation-prone LYZ variants (in vitro). Does not require ATP. Maintains partially unfolded proteins in a state appropriate for subsequent refolding by other chaperones, such as HSPA8/HSC70. Does not refold proteins by itself. Binding to cell surface receptors triggers internalization of the chaperone-client complex and subsequent lysosomal or proteasomal degradation. Protects cells against apoptosis and against cytolysis by complement: inhibits assembly of the complement membrane attack complex (MAC) by preventing polymerization of C9 pore component of the MAC complex. Intracellular forms interact with ubiquitin and SCF (SKP1-CUL1-F-box protein) E3 ubiquitin-protein ligase complexes and promote the ubiquitination and subsequent proteasomal degradation of target proteins. Promotes proteasomal degradation of COMMD1 and IKBKB. Modulates NF-kappa-B transcriptional activity. A mitochondrial form suppresses BAX-dependent release of cytochrome c into the cytoplasm and inhibit apoptosis. Plays a role in the regulation of cell proliferation. An intracellular form suppresses stress-induced apoptosis by stabilizing mitochondrial membrane integrity through interaction with HSPA5. Secreted form does not affect caspase or BAX-mediated intrinsic apoptosis and TNF-induced NF-kappa-B-activity. Secreted form act as an important modulator during neuronal differentiation through interaction with STMN3. Plays a role in the clearance of immune complexes that arise during cell injury. In terms of biological role, does not affect caspase or BAX-mediated intrinsic apoptosis and TNF-induced NF-kappa-B-activity. Its function is as follows. Does not affect caspase or BAX-mediated intrinsic apoptosis and TNF-induced NF-kappa-B-activity. Promotes cell death through interaction with BCL2L1 that releases and activates BAX. The sequence is that of Clusterin from Homo sapiens (Human).